A 407-amino-acid polypeptide reads, in one-letter code: Putative mannan endo-1,4-beta-mannosidase 9 (407 aa).

A signal peptide spans 1-31; that stretch reads MGSKRRVILLPTLGVVVLAIAAAVLLHAGEA. Substrate-binding residues include W95 and N208. E209 acts as the Proton donor in catalysis. Residue Y284 participates in substrate binding. E324 (nucleophile) is an active-site residue. W366 is a binding site for substrate.

The protein belongs to the glycosyl hydrolase 5 (cellulase A) family. As to expression, expression not detected.

It is found in the secreted. It carries out the reaction Random hydrolysis of (1-&gt;4)-beta-D-mannosidic linkages in mannans, galactomannans and glucomannans.. This chain is Putative mannan endo-1,4-beta-mannosidase 9 (MAN9), found in Oryza sativa subsp. japonica (Rice).